Consider the following 233-residue polypeptide: Aspartate/glutamate leucyltransferase (233 aa).

The protein belongs to the R-transferase family. Bpt subfamily.

The protein localises to the cytoplasm. The enzyme catalyses N-terminal L-glutamyl-[protein] + L-leucyl-tRNA(Leu) = N-terminal L-leucyl-L-glutamyl-[protein] + tRNA(Leu) + H(+). It catalyses the reaction N-terminal L-aspartyl-[protein] + L-leucyl-tRNA(Leu) = N-terminal L-leucyl-L-aspartyl-[protein] + tRNA(Leu) + H(+). Its function is as follows. Functions in the N-end rule pathway of protein degradation where it conjugates Leu from its aminoacyl-tRNA to the N-termini of proteins containing an N-terminal aspartate or glutamate. In Vibrio cholerae serotype O1 (strain ATCC 39315 / El Tor Inaba N16961), this protein is Aspartate/glutamate leucyltransferase.